The primary structure comprises 140 residues: Regulator of ribonuclease activity B (140 aa).

Residues 115–140 form a disordered region; the sequence is FEDPNAQDDDEDDGEAIDEDDNGIRH. Positions 119–140 are enriched in acidic residues; the sequence is NAQDDDEDDGEAIDEDDNGIRH.

It belongs to the RraB family. Interacts with the C-terminal region of Rne.

The protein resides in the cytoplasm. Functionally, globally modulates RNA abundance by binding to RNase E (Rne) and regulating its endonucleolytic activity. Can modulate Rne action in a substrate-dependent manner by altering the composition of the degradosome. This Pantoea ananatis (strain LMG 20103) protein is Regulator of ribonuclease activity B.